Here is a 516-residue protein sequence, read N- to C-terminus: Cytochrome P450 1A2 (516 aa).

The O-linked (GlcNAc) serine glycan is linked to Ser69. A substrate-binding site is contributed by Phe226. Position 458 (Cys458) interacts with heme.

This sequence belongs to the cytochrome P450 family. As to quaternary structure, interacts with PGRMC1; the interaction requires PGRMC1 homodimerization. It depends on heme as a cofactor.

The protein localises to the endoplasmic reticulum membrane. It localises to the microsome membrane. The enzyme catalyses an organic molecule + reduced [NADPH--hemoprotein reductase] + O2 = an alcohol + oxidized [NADPH--hemoprotein reductase] + H2O + H(+). It catalyses the reaction 17beta-estradiol + reduced [NADPH--hemoprotein reductase] + O2 = 2-hydroxy-17beta-estradiol + oxidized [NADPH--hemoprotein reductase] + H2O + H(+). It carries out the reaction 17beta-estradiol + reduced [NADPH--hemoprotein reductase] + O2 = 4-hydroxy-17beta-estradiol + oxidized [NADPH--hemoprotein reductase] + H2O + H(+). The catalysed reaction is estrone + reduced [NADPH--hemoprotein reductase] + O2 = 2-hydroxyestrone + oxidized [NADPH--hemoprotein reductase] + H2O + H(+). The enzyme catalyses estrone + reduced [NADPH--hemoprotein reductase] + O2 = 4-hydroxyestrone + oxidized [NADPH--hemoprotein reductase] + H2O + H(+). It catalyses the reaction cholesterol + reduced [NADPH--hemoprotein reductase] + O2 = 25-hydroxycholesterol + oxidized [NADPH--hemoprotein reductase] + H2O + H(+). It carries out the reaction all-trans-retinol + reduced [NADPH--hemoprotein reductase] + O2 = all-trans-retinal + oxidized [NADPH--hemoprotein reductase] + 2 H2O + H(+). The catalysed reaction is all-trans-retinal + reduced [NADPH--hemoprotein reductase] + O2 = all-trans-retinoate + oxidized [NADPH--hemoprotein reductase] + H2O + 2 H(+). The enzyme catalyses (5Z,8Z,11Z,14Z)-eicosatetraenoate + reduced [NADPH--hemoprotein reductase] + O2 = (14R,15S)-epoxy-(5Z,8Z,11Z)-eicosatrienoate + oxidized [NADPH--hemoprotein reductase] + H2O + H(+). It catalyses the reaction (5Z,8Z,11Z,14Z)-eicosatetraenoate + reduced [NADPH--hemoprotein reductase] + O2 = (14S,15R)-epoxy-(5Z,8Z,11Z)-eicosatrienoate + oxidized [NADPH--hemoprotein reductase] + H2O + H(+). It carries out the reaction (5Z,8Z,11Z,14Z,17Z)-eicosapentaenoate + reduced [NADPH--hemoprotein reductase] + O2 = (17R,18S)-epoxy-(5Z,8Z,11Z,14Z)-eicosatetraenoate + oxidized [NADPH--hemoprotein reductase] + H2O + H(+). The catalysed reaction is (4Z,7Z,10Z,13Z,16Z,19Z)-docosahexaenoate + reduced [NADPH--hemoprotein reductase] + O2 = (19R,20S)-epoxy-(4Z,7Z,10Z,13Z,16Z)-docosapentaenoate + oxidized [NADPH--hemoprotein reductase] + H2O + H(+). The enzyme catalyses (5S)-hydroperoxy-(6E,8Z,11Z,14Z)-eicosatetraenoate = 5-oxo-(6E,8Z,11Z,14Z)-eicosatetraenoate + H2O. It catalyses the reaction (12S)-hydroperoxy-(5Z,8Z,10E,14Z)-eicosatetraenoate = 12-oxo-(5Z,8Z,10E,14Z)-eicosatetraenoate + H2O. It carries out the reaction (15S)-hydroperoxy-(5Z,8Z,11Z,13E)-eicosatetraenoate = 15-oxo-(5Z,8Z,11Z,13E)-eicosatetraenoate + H2O. The catalysed reaction is (13S)-hydroperoxy-(9Z,11E)-octadecadienoate = 13-oxo-(9Z,11E)-octadecadienoate + H2O. The enzyme catalyses (5Z,8Z,11Z,14Z)-eicosatetraenoate + reduced [NADPH--hemoprotein reductase] + O2 = 13-hydroxy-(5Z,8Z,11Z,14Z)-eicosatetraenoate + oxidized [NADPH--hemoprotein reductase] + H2O + H(+). It catalyses the reaction (5Z,8Z,11Z,14Z)-eicosatetraenoate + reduced [NADPH--hemoprotein reductase] + O2 = 19-hydroxy-(5Z,8Z,11Z,14Z)-eicosatetraenoate + oxidized [NADPH--hemoprotein reductase] + H2O + H(+). It carries out the reaction (9Z,12Z)-octadecadienoate + reduced [NADPH--hemoprotein reductase] + O2 = 11-hydroxy-(9Z,12Z)-octadecadienoate + oxidized [NADPH--hemoprotein reductase] + H2O + H(+). Its pathway is cofactor metabolism; retinol metabolism. It functions in the pathway steroid metabolism; cholesterol metabolism. The protein operates within lipid metabolism; arachidonate metabolism. Functionally, a cytochrome P450 monooxygenase involved in the metabolism of various endogenous substrates, including fatty acids, steroid hormones and vitamins. Mechanistically, uses molecular oxygen inserting one oxygen atom into a substrate, and reducing the second into a water molecule, with two electrons provided by NADPH via cytochrome P450 reductase (NADPH--hemoprotein reductase). Catalyzes the hydroxylation of carbon-hydrogen bonds. Exhibits high catalytic activity for the formation of hydroxyestrogens from estrone (E1) and 17beta-estradiol (E2), namely 2-hydroxy E1 and E2. Metabolizes cholesterol toward 25-hydroxycholesterol, a physiological regulator of cellular cholesterol homeostasis. May act as a major enzyme for all-trans retinoic acid biosynthesis in the liver. Catalyzes two successive oxidative transformation of all-trans retinol to all-trans retinal and then to the active form all-trans retinoic acid. Primarily catalyzes stereoselective epoxidation of the last double bond of polyunsaturated fatty acids (PUFA), displaying a strong preference for the (R,S) stereoisomer. Catalyzes bisallylic hydroxylation and omega-1 hydroxylation of PUFA. May also participate in eicosanoids metabolism by converting hydroperoxide species into oxo metabolites (lipoxygenase-like reaction, NADPH-independent). Plays a role in the oxidative metabolism of xenobiotics. Catalyzes the N-hydroxylation of heterocyclic amines and the O-deethylation of phenacetin. Metabolizes caffeine via N3-demethylation. The chain is Cytochrome P450 1A2 (CYP1A2) from Macaca fuscata fuscata (Japanese macaque).